The following is a 274-amino-acid chain: 2,3,4,5-tetrahydropyridine-2,6-dicarboxylate N-succinyltransferase (274 aa).

2 residues coordinate substrate: arginine 106 and aspartate 143.

This sequence belongs to the transferase hexapeptide repeat family. As to quaternary structure, homotrimer.

The protein resides in the cytoplasm. It carries out the reaction (S)-2,3,4,5-tetrahydrodipicolinate + succinyl-CoA + H2O = (S)-2-succinylamino-6-oxoheptanedioate + CoA. It functions in the pathway amino-acid biosynthesis; L-lysine biosynthesis via DAP pathway; LL-2,6-diaminopimelate from (S)-tetrahydrodipicolinate (succinylase route): step 1/3. The protein is 2,3,4,5-tetrahydropyridine-2,6-dicarboxylate N-succinyltransferase of Albidiferax ferrireducens (strain ATCC BAA-621 / DSM 15236 / T118) (Rhodoferax ferrireducens).